We begin with the raw amino-acid sequence, 132 residues long: Z-ring associated protein G (132 aa).

A helical membrane pass occupies residues 1-21; sequence MTWEYALIGLVVGIIIGAVAM. The disordered stretch occupies residues 95 to 132; it reads FRNRLAESEASNDQAPVQMPRDYSEGASGLLRTGAKRD.

This sequence belongs to the ZapG family.

It localises to the cell inner membrane. Functionally, involved in cell division, cell envelope biogenesis and cell shape maintenance. The sequence is that of Z-ring associated protein G from Escherichia coli O157:H7.